We begin with the raw amino-acid sequence, 525 residues long: DEAD-box ATP-dependent RNA helicase CshA (525 aa).

The short motif at 2-30 (TTFRELGLSDSLLQSVESMGFEEATPIQA) is the Q motif element. A Helicase ATP-binding domain is found at 33 to 203 (IPHALQGKDI…ERFMTEPQHI (171 aa)). Position 46–53 (46–53 (AQTGTGKT)) interacts with ATP. Positions 151 to 154 (DEAD) match the DEAD box motif. Positions 214 to 374 (NIQQFYLEVQ…RMDAPTLDEA (161 aa)) constitute a Helicase C-terminal domain. Residues 428 to 525 (TTPIALTSEP…RKHHSRKPQA (98 aa)) are disordered. The segment covering 458–503 (DGNRNRSRDGRGGDGRNRDRNRDGRNRDGNRDRNRDGGNRGRRGEG) has biased composition (basic and acidic residues). Over residues 515–525 (ERKHHSRKPQA) the composition is skewed to basic residues.

This sequence belongs to the DEAD box helicase family. CshA subfamily. Oligomerizes, may be a member of the RNA degradosome.

The protein resides in the cytoplasm. The catalysed reaction is ATP + H2O = ADP + phosphate + H(+). In terms of biological role, DEAD-box RNA helicase possibly involved in RNA degradation. Unwinds dsRNA in both 5'- and 3'-directions, has RNA-dependent ATPase activity. This Bacillus cereus (strain ATCC 10987 / NRS 248) protein is DEAD-box ATP-dependent RNA helicase CshA.